The sequence spans 241 residues: Terpene cyclase terB (241 aa).

5 helical membrane passes run 19–39 (LADTLVAFMGIGWLINYGAMI), 48–68 (YCMGIIPLCNNIGWELVYTLV), 75–95 (VELAVFAAGVTLNVIIMFAAT), 114–134 (LIFLGGTFVCFAGHVALAAEI), and 137–157 (ALAYSWGAVICQLVLSIGGVC). An N-linked (GlcNAc...) asparagine glycan is attached at Asn-163. The next 2 helical transmembrane spans lie at 169-189 (SVTLWLSRFLGSCCTVGFAFL) and 198-218 (FAWLAGPLVLWSLATFVLADI).

The protein belongs to the paxB family.

The protein localises to the membrane. It participates in secondary metabolite biosynthesis. Its function is as follows. Terpene cyclase; part of the gene cluster that mediates the biosynthesis of terpendoles, indole-diterpene (IDT) mycotoxins including terpendole I, terpendole K, terpendole C, as well as the kinesin Eg5 inhibitor terpendole E. Terpendoles biosynthesis begins with the synthesis of geranylgeranyl diphosphate (GGPP) by a yet unidentified GGPP synthase. Condensation of indole-3-glycerol phosphate with GGPP by the prenyltransferase terC then forms 3-geranylgeranylindole (3-GGI), followed by epoxidation and cyclization of this intermediate (by the FAD-dependent monooxygeanse terM and the terpene cyclase terB) to form paspaline. The cytochrome monooxygenase terQ then hydroxylates paspalline at C-11 to yield terpendole E. The cytochrome monooxygenase terP converts terpendole E to 13-desoxyterpendole I, and terQ converts 13-desoxyterpendole I into terpendole I. TerF and terK are required for conversion of terpendole I to terpendole C which is further converted to terpendole K. The polypeptide is Terpene cyclase terB (Tolypocladium album (Soil fungus)).